We begin with the raw amino-acid sequence, 177 residues long: MPKRSCPFTDAAPLQLKVHVSPRELSHGVFAERYSREVFERTKQLLFQGAQAYRDHIWGEGCSINHLPEPLKPGLVGAPQAARGQMLIGPDGRLTRCQAQASEAGLPGAAPIACSSCVRSVDGKAVCSQCERALCGQCVYTCWGCGALACVLCGLADYADDDDGEKTLCTSCAMFEA.

Position 34 is a phosphotyrosine; by ABL2 (Y34). The interaction with BCL2L1 isoform Bcl-x(L) and inhibition of BCL2L1 anti-apoptotic activity stretch occupies residues 36 to 55; the sequence is REVFERTKQLLFQGAQAYRD.

In terms of assembly, binds through its N-terminal region to the C-terminus of CD27 and to PXMP2/PMP22. Binds to the C-terminus of TNFRSF18/GITR. Binds to BCL2L1/BCLX isoform Bcl-x(L) but not to BAX. Requires Zn(2+) as cofactor. As to expression, in post-ischemic kidney, found in cells lining the S3 segment of proximal tubules at 12 hours and 1 day post-ischemia. At five and seven days post-ischemia, found in epithelial cells of papillary proliferations in regenerating tubules.

The protein resides in the cytoplasm. It is found in the nucleus. In terms of biological role, induces CD27-mediated apoptosis. Inhibits BCL2L1 isoform Bcl-x(L) anti-apoptotic activity. Inhibits activation of NF-kappa-B and promotes T-cell receptor-mediated apoptosis. In Rattus norvegicus (Rat), this protein is Apoptosis regulatory protein Siva (Siva1).